A 205-amino-acid chain; its full sequence is Regulator of G-protein signaling 4 (205 aa).

S-palmitoyl cysteine attachment occurs at residues cysteine 2, cysteine 12, and cysteine 95. The RGS domain maps to 62-178 (SLENLISHEC…LKSRFYLDLV (117 aa)).

Post-translationally, palmitoylated on Cys-2 and/or Cys-12. Phosphorylated by cyclic GMP-dependent protein kinase.

Functionally, inhibits signal transduction by increasing the GTPase activity of G protein alpha subunits thereby driving them into their inactive GDP-bound form. Activity on G(z)-alpha is inhibited by phosphorylation of the G-protein. Activity on G(z)-alpha and G(i)-alpha-1 is inhibited by palmitoylation of the G-protein. The protein is Regulator of G-protein signaling 4 (RGS4) of Pongo abelii (Sumatran orangutan).